The sequence spans 40 residues: Photosystem II reaction center protein L (40 aa).

The helical transmembrane segment at 19–39 (SLFLGLLLVFVLGILFSSYFF) threads the bilayer.

This sequence belongs to the PsbL family. In terms of assembly, PSII is composed of 1 copy each of membrane proteins PsbA, PsbB, PsbC, PsbD, PsbE, PsbF, PsbH, PsbI, PsbJ, PsbK, PsbL, PsbM, PsbT, PsbX, PsbY, PsbZ, Psb30/Ycf12, peripheral proteins PsbO, CyanoQ (PsbQ), PsbU, PsbV and a large number of cofactors. It forms dimeric complexes.

The protein resides in the cellular thylakoid membrane. In terms of biological role, one of the components of the core complex of photosystem II (PSII). PSII is a light-driven water:plastoquinone oxidoreductase that uses light energy to abstract electrons from H(2)O, generating O(2) and a proton gradient subsequently used for ATP formation. It consists of a core antenna complex that captures photons, and an electron transfer chain that converts photonic excitation into a charge separation. This subunit is found at the monomer-monomer interface and is required for correct PSII assembly and/or dimerization. The chain is Photosystem II reaction center protein L from Synechococcus elongatus (strain ATCC 33912 / PCC 7942 / FACHB-805) (Anacystis nidulans R2).